The following is a 255-amino-acid chain: 3-hydroxyacyl-CoA dehydrogenase type-2 (255 aa).

Positions 14, 16, 35, 58, 59, and 85 each coordinate NAD(+). Ser149 is a binding site for substrate. Positions 162, 166, 195, and 197 each coordinate NAD(+). Tyr162 acts as the Proton acceptor in catalysis.

Belongs to the short-chain dehydrogenases/reductases (SDR) family. In terms of assembly, component of mitochondrial ribonuclease P, a complex composed of rswl/MRPP1, scu/MRPP2 and mldr/MRPP3. Found in many tissues including CNS, imaginal disks and salivary glands. Highest expression in both embryonic gonadal primordia and mature ovaries and testes.

The protein resides in the mitochondrion. It catalyses the reaction a (3S)-3-hydroxyacyl-CoA + NAD(+) = a 3-oxoacyl-CoA + NADH + H(+). The catalysed reaction is (3S)-3-hydroxybutanoyl-CoA + NAD(+) = acetoacetyl-CoA + NADH + H(+). The enzyme catalyses testosterone + NAD(+) = androst-4-ene-3,17-dione + NADH + H(+). It carries out the reaction 5alpha-androstane-3alpha,17beta-diol + NAD(+) = 17beta-hydroxy-5alpha-androstan-3-one + NADH + H(+). It catalyses the reaction 17beta-estradiol + NAD(+) = estrone + NADH + H(+). The catalysed reaction is ursodeoxycholate + NAD(+) = 7-oxolithocholate + NADH + H(+). The enzyme catalyses 3beta,7beta-dihydroxy-5beta-cholan-24-oate + NAD(+) = 3beta-hydroxy-7-oxo-5beta-cholan-24-oate + NADH + H(+). It carries out the reaction 11-dehydrocorticosterone + NAD(+) = pregn-4-ene-3,11,20,21-tetraone + NADH + H(+). It catalyses the reaction cortisone + NAD(+) = 17alpha-hydroxypregn-4-en-3,11,20-trione-21-al + NADH + H(+). The catalysed reaction is cortisol + NAD(+) = 11beta,17alpha-dihydroxypregn-4-ene-3,20,21-trione + NADH + H(+). The enzyme catalyses 5alpha-pregnan-20beta-ol-3-one + NAD(+) = 5alpha-pregnane-3,20-dione + NADH + H(+). It carries out the reaction 17beta-hydroxy-5alpha-androstan-3-one + NAD(+) = 5alpha-androstan-3,17-dione + NADH + H(+). In terms of biological role, mitochondrial dehydrogenase involved in pathways of fatty acid, and steroid metabolism. Versatile enzyme presenting two types of activity; L-3-hydroxyacyl-CoA dehydrogenase ((3S)-3-hydroxyacyl-CoA dehydrogenase) activity and hydroxysteroid dehydrogenase (HSD) activity with a wide substrate spectrum. As a (3S)-3-hydroxyacyl-CoA dehydrogenase, it functions in the third step of the fatty acid beta-oxidation pathway, a major metabolic process in which fatty acids are oxidized to provide a significant source of energy, while also generating acyl-CoA metabolites used by many metabolic routes. As a HSD, it functions in the degradation pathways of glucocorticoids and sex steroids and epimerization of bile acids; catalyzes the beta-oxidation at position 17 of androgens and estrogens, has 3-alpha-hydroxysteroid dehydrogenase activity with androsterone, and carries out oxidative conversions of 7-beta-hydroxylated bile acids like ursodeoxycholate or isoursodeoxycholate (also known as 3-beta,7-beta-dihydroxy-5-beta-cholan-24-oate or 7-beta-hydroxyisolithocholate, respectively). Also exhibits 20-beta-OH and 21-OH dehydrogenase activities with C21 steroids. Essential for structural and functional integrity of mitochondria. Required for cell survival during embryonic development. May play a role in germline formation. In addition to mitochondrial dehydrogenase activity, moonlights as a component of mitochondrial ribonuclease P, a complex that cleaves tRNA molecules in their 5'-ends. Essential for the structural and functional integrity of mitochondria. Function is essential for pupal development. This chain is 3-hydroxyacyl-CoA dehydrogenase type-2, found in Drosophila melanogaster (Fruit fly).